We begin with the raw amino-acid sequence, 111 residues long: MIGVILVLASLLSVGGQLCQKQATRPLTAGGRRRHLMLWLGLALICMGAAMVLWLLVLQTLPVGIAYPMLSLNFVWVTLAAWKIWHEQVPPRHWLGVALIISGIIILGSAA.

Helical transmembrane passes span 38-58 (LWLGLALICMGAAMVLWLLVL), 61-81 (LPVGIAYPMLSLNFVWVTLAA), and 91-111 (PRHWLGVALIISGIIILGSAA). One can recognise an EamA domain in the interval 40-109 (LGLALICMGA…IISGIIILGS (70 aa)).

It belongs to the ArnE family. Heterodimer of ArnE and ArnF.

It is found in the cell inner membrane. It functions in the pathway bacterial outer membrane biogenesis; lipopolysaccharide biosynthesis. In terms of biological role, translocates 4-amino-4-deoxy-L-arabinose-phosphoundecaprenol (alpha-L-Ara4N-phosphoundecaprenol) from the cytoplasmic to the periplasmic side of the inner membrane. This Salmonella newport (strain SL254) protein is Probable 4-amino-4-deoxy-L-arabinose-phosphoundecaprenol flippase subunit ArnE.